A 1338-amino-acid polypeptide reads, in one-letter code: ABC-type transporter kk1G (1338 aa).

The interval 1-21 (MSAIELPPLRSRSEEAARAEH) is disordered. A compositionally biased stretch (basic and acidic residues) spans 11–21 (SRSEEAARAEH). The next 6 helical transmembrane spans lie at 75-95 (YFLI…MPLM), 130-150 (LYIF…MLAI), 203-223 (HFAT…VALV), 230-250 (LIAS…FPPF), 312-332 (TMSP…WFGI), and 340-360 (ISSV…VMNI). Residues 80–372 (LCCFTSIGAG…VASPIISIAK (293 aa)) form the ABC transmembrane type-1 1 domain. Residues 405–706 (ITFINVAFSY…GDGVYYGLVH (302 aa)) form the ABC transporter 1 domain. 440-447 (GPSGSGKS) provides a ligand contact to ATP. 2 disordered regions span residues 473–518 (EIPS…TCTG) and 715–747 (EDDD…HASR). Transmembrane regions (helical) follow at residues 777 to 797 (VCCI…YIFA), 816 to 836 (FWAG…YLLG), 895 to 917 (MSMA…VYGW), 919 to 941 (LSLV…RTRL), 1003 to 1023 (IIFA…FWYG), and 1037 to 1057 (FFIV…WFSF). In terms of domain architecture, ABC transmembrane type-1 2 spans 777–1063 (VCCIGILGAG…WFSFTPSMAQ (287 aa)). An ABC transporter 2 domain is found at 1096 to 1333 (IEFQHVSFKY…KGVYWQMCQA (238 aa)). 1130–1137 (GSSGCGKS) contacts ATP.

Belongs to the ABC transporter superfamily. ABCB family. Multidrug resistance exporter (TC 3.A.1.201) subfamily.

It localises to the cell membrane. It functions in the pathway secondary metabolite biosynthesis. Functionally, ABC transporter; part of the gene cluster that mediates the biosynthesis of KK-1, a novel cyclic depsipeptide with 10 residues which is a promising active compound with high activity against many plant pathogens, especially Botrytis cinerea. Is probably directly involved in the secretion of KK-1 and thus confers self-tolerance against KK-1. This Curvularia clavata protein is ABC-type transporter kk1G.